Reading from the N-terminus, the 187-residue chain is Ribonuclease HII (187 aa).

The RNase H type-2 domain occupies 1–187 (MIILGIDEAG…YKPVQVLLNE (187 aa)). 3 residues coordinate a divalent metal cation: aspartate 7, glutamate 8, and aspartate 99.

This sequence belongs to the RNase HII family. It depends on Mn(2+) as a cofactor. Mg(2+) serves as cofactor.

Its subcellular location is the cytoplasm. It catalyses the reaction Endonucleolytic cleavage to 5'-phosphomonoester.. Endonuclease that specifically degrades the RNA of RNA-DNA hybrids. The protein is Ribonuclease HII of Francisella tularensis subsp. holarctica (strain FTNF002-00 / FTA).